A 1804-amino-acid chain; its full sequence is Collagen alpha-1(XI) chain (1804 aa).

The first 34 residues, methionine 1 to glycine 34, serve as a signal peptide directing secretion. Positions alanine 35–glutamate 511 are cleaved as a propeptide — N-terminal propeptide. Intrachain disulfides connect cysteine 60-cysteine 242 and cysteine 181-cysteine 235. Residues aspartate 70 to cysteine 242 enclose the Laminin G-like domain. Residues lysine 229–histidine 417 form a nonhelical region region. Residues tyrosine 315–proline 329 show a composition bias toward polar residues. 2 disordered regions span residues tyrosine 315–glutamate 334 and glutamate 433–threonine 506. A triple-helical region (interrupted) region spans residues glycine 418–threonine 506. Residues glycine 440–glycine 488 enclose the Collagen-like 1 domain. Composition is skewed to low complexity over residues proline 447–aspartate 465 and leucine 477–proline 494. A short nonhelical segment region spans residues isoleucine 507–alanine 509. Positions glutamine 510–glycine 527 are telopeptide. Residues arginine 526 to isoleucine 1567 are disordered. 2 Collagen-like domains span residues glycine 527–glycine 584 and proline 567–glycine 623. The tract at residues proline 528 to valine 1540 is triple-helical region. Composition is skewed to gly residues over residues glycine 539–glycine 548 and glycine 581–glycine 590. At lysine 610 the chain carries Allysine. Positions proline 639–arginine 655 are enriched in low complexity. Pro residues predominate over residues glutamine 697 to proline 708. Residues glutamine 715–alanine 726 are compositionally biased toward low complexity. A Collagen-like 4 domain is found at glycine 728 to aspartate 781. Positions arginine 805–lysine 814 are enriched in basic and acidic residues. 3 stretches are compositionally biased toward low complexity: residues lysine 873 to lysine 901, arginine 916 to valine 925, and proline 969 to isoleucine 979. Gly residues predominate over residues glycine 1040–glycine 1049. Residues arginine 1074–proline 1083 are compositionally biased toward pro residues. Over residues alanine 1084–valine 1108 the composition is skewed to low complexity. Positions glycine 1160–glycine 1169 are enriched in gly residues. Pro residues predominate over residues methionine 1216–proline 1227. Low complexity-rich tracts occupy residues proline 1240–valine 1249 and alanine 1282–proline 1296. Positions glutamine 1341–arginine 1360 are enriched in pro residues. Composition is skewed to low complexity over residues alanine 1383 to proline 1392 and glutamine 1417 to aspartate 1426. Collagen-like domains lie at glycine 1427 to alanine 1482 and glycine 1481 to glutamate 1539. Over residues proline 1428–leucine 1437 the composition is skewed to pro residues. Residue lysine 1450 is modified to Allysine. Over residues proline 1453 to proline 1462 the composition is skewed to low complexity. Positions glycine 1481–glycine 1490 are enriched in gly residues. The segment covering proline 1491 to alanine 1507 has biased composition (pro residues). Residues proline 1509–threonine 1519 show a composition bias toward low complexity. Residues proline 1528–proline 1537 show a composition bias toward pro residues. The segment at isoleucine 1541–glycine 1561 is nonhelical region (C-terminal). Positions aspartate 1562 to glycine 1804 are cleaved as a propeptide — C-terminal propeptide. The 229-residue stretch at glutamate 1575–leucine 1803 folds into the Fibrillar collagen NC1 domain. A disulfide bridge connects residues cysteine 1605 and cysteine 1637. Ca(2+)-binding residues include aspartate 1623, asparagine 1625, glutamine 1626, cysteine 1628, and aspartate 1631. Asparagine 1638 carries N-linked (GlcNAc...) asparagine glycosylation. Intrachain disulfides connect cysteine 1646–cysteine 1801 and cysteine 1712–cysteine 1755.

This sequence belongs to the fibrillar collagen family. Trimers composed of three different chains: alpha 1(XI), alpha 2(XI), and alpha 3(XI). Alpha 3(XI) is a post-translational modification of alpha 1(II). Alpha 1(V) can also be found instead of alpha 3(XI)=1(II). Prolines at the third position of the tripeptide repeating unit (G-X-Y) are hydroxylated in some or all of the chains. In terms of processing, N-glycosylated.

It localises to the secreted. Its subcellular location is the extracellular space. The protein localises to the extracellular matrix. Its function is as follows. May play an important role in fibrillogenesis by controlling lateral growth of collagen II fibrils. This is Collagen alpha-1(XI) chain (Col11a1) from Mus musculus (Mouse).